Consider the following 232-residue polypeptide: Dephospho-CoA kinase (232 aa).

Positions 3 to 206 constitute a DPCK domain; that stretch reads IVGLTGGIAS…RPLTWIEFWR (204 aa). An ATP-binding site is contributed by 8-15; sequence GGIASGKS.

Belongs to the CoaE family.

The protein resides in the peroxisome. The catalysed reaction is 3'-dephospho-CoA + ATP = ADP + CoA + H(+). It functions in the pathway cofactor biosynthesis; coenzyme A biosynthesis; CoA from (R)-pantothenate: step 5/5. Functionally, catalyzes the phosphorylation of the 3'-hydroxyl group of dephosphocoenzyme A to form coenzyme A. This is Dephospho-CoA kinase from Arabidopsis thaliana (Mouse-ear cress).